The following is a 146-amino-acid chain: uncharacterized protein (146 aa).

The chain crosses the membrane as a helical span at residues 7–27 (FVLSITIVLVILIIIAFIWYN).

This sequence belongs to the asfivirus E146L family.

The protein resides in the host membrane. It is found in the virion. This is an uncharacterized protein from Ornithodoros (relapsing fever ticks).